The primary structure comprises 560 residues: Protein yellow (560 aa).

The first 30 residues, M1–A30, serve as a signal peptide directing secretion. N153 and N224 each carry an N-linked (GlcNAc...) asparagine glycan. The tract at residues Q452 to V492 is disordered. The span at S471–A480 shows a compositional bias: low complexity.

Belongs to the major royal jelly protein family.

The protein resides in the secreted. Its function is as follows. Controls the pigmentation pattern of the adult cuticle and larval mouth parts. The chain is Protein yellow (y) from Drosophila pseudoobscura pseudoobscura (Fruit fly).